A 480-amino-acid polypeptide reads, in one-letter code: Glutamyl-tRNA(Gln) amidotransferase subunit A (480 aa).

Residues K70 and S145 each act as charge relay system in the active site. The active-site Acyl-ester intermediate is the S169.

This sequence belongs to the amidase family. GatA subfamily. As to quaternary structure, heterotrimer of A, B and C subunits.

The catalysed reaction is L-glutamyl-tRNA(Gln) + L-glutamine + ATP + H2O = L-glutaminyl-tRNA(Gln) + L-glutamate + ADP + phosphate + H(+). Allows the formation of correctly charged Gln-tRNA(Gln) through the transamidation of misacylated Glu-tRNA(Gln) in organisms which lack glutaminyl-tRNA synthetase. The reaction takes place in the presence of glutamine and ATP through an activated gamma-phospho-Glu-tRNA(Gln). The polypeptide is Glutamyl-tRNA(Gln) amidotransferase subunit A (Lactobacillus delbrueckii subsp. bulgaricus (strain ATCC BAA-365 / Lb-18)).